The following is a 212-amino-acid chain: Uridine kinase (212 aa).

Position 13 to 20 (13 to 20) interacts with ATP; it reads GGSGSGKT.

The protein belongs to the uridine kinase family.

The protein resides in the cytoplasm. The enzyme catalyses uridine + ATP = UMP + ADP + H(+). The catalysed reaction is cytidine + ATP = CMP + ADP + H(+). It participates in pyrimidine metabolism; CTP biosynthesis via salvage pathway; CTP from cytidine: step 1/3. The protein operates within pyrimidine metabolism; UMP biosynthesis via salvage pathway; UMP from uridine: step 1/1. This chain is Uridine kinase, found in Bacillus thuringiensis (strain Al Hakam).